The sequence spans 299 residues: Ent-kaurene oxidase-like protein 1 (299 aa).

A helical membrane pass occupies residues Ala16 to Leu36.

This sequence belongs to the cytochrome P450 family. In terms of tissue distribution, expressed in roots and panicles.

The protein resides in the membrane. This is Ent-kaurene oxidase-like protein 1 from Oryza sativa subsp. japonica (Rice).